Reading from the N-terminus, the 188-residue chain is Succinate-acetate/proton symporter SatP (188 aa).

The Cytoplasmic portion of the chain corresponds to 1–13 (MGNTKLANPAPLG). The helical transmembrane segment at 14–34 (LMGFGMTTILLNLHNVGYFAL) threads the bilayer. Residue Asp35 is a topological domain, periplasmic. The chain crosses the membrane as a helical span at residues 36 to 56 (GIILAMGIFYGGIAQIFAGLL). The Cytoplasmic segment spans residues 57 to 63 (EYKKGNT). The chain crosses the membrane as a helical span at residues 64-84 (FGLTAFTSYGSFWLTLVAILL). The Periplasmic portion of the chain corresponds to 85–97 (MPKLGLTDAPNAQ). Residues 98–118 (FLGVYLGLWGVFTLFMFFGTL) traverse the membrane as a helical segment. The Cytoplasmic segment spans residues 119–122 (KGAR). Residues 123-143 (VLQFVFFSLTVLFALLAIGNI) form a helical membrane-spanning segment. Over 144–148 (AGNAA) the chain is Periplasmic. Residues 149–169 (IIHFAGWIGLICGASAIYLAM) traverse the membrane as a helical segment. Topologically, residues 170–188 (GEVLNEQFGRTVLPIGESH) are cytoplasmic.

This sequence belongs to the acetate uptake transporter (AceTr) (TC 2.A.96) family.

It localises to the cell inner membrane. Functionally, uptake of acetate and succinate. Transport is energetically dependent on the protonmotive force. This Escherichia coli O157:H7 protein is Succinate-acetate/proton symporter SatP (satP).